A 166-amino-acid polypeptide reads, in one-letter code: Large ribosomal subunit protein bL19 (166 aa).

Belongs to the bacterial ribosomal protein bL19 family.

In terms of biological role, this protein is located at the 30S-50S ribosomal subunit interface and may play a role in the structure and function of the aminoacyl-tRNA binding site. This is Large ribosomal subunit protein bL19 from Chelativorans sp. (strain BNC1).